Here is a 475-residue protein sequence, read N- to C-terminus: Bifunctional protein HldE (475 aa).

The ribokinase stretch occupies residues 1 to 317 (MQYSAQFNRA…ENAIHGRTTA (317 aa)). 194 to 197 (NMSE) is an ATP binding site. Residue D263 is part of the active site. The segment at 343 to 475 (MTNGCFDILH…VIKKIQQLKE (133 aa)) is cytidylyltransferase.

The protein in the N-terminal section; belongs to the carbohydrate kinase PfkB family. In the C-terminal section; belongs to the cytidylyltransferase family. In terms of assembly, homodimer.

The enzyme catalyses D-glycero-beta-D-manno-heptose 7-phosphate + ATP = D-glycero-beta-D-manno-heptose 1,7-bisphosphate + ADP + H(+). It catalyses the reaction D-glycero-beta-D-manno-heptose 1-phosphate + ATP + H(+) = ADP-D-glycero-beta-D-manno-heptose + diphosphate. It functions in the pathway nucleotide-sugar biosynthesis; ADP-L-glycero-beta-D-manno-heptose biosynthesis; ADP-L-glycero-beta-D-manno-heptose from D-glycero-beta-D-manno-heptose 7-phosphate: step 1/4. The protein operates within nucleotide-sugar biosynthesis; ADP-L-glycero-beta-D-manno-heptose biosynthesis; ADP-L-glycero-beta-D-manno-heptose from D-glycero-beta-D-manno-heptose 7-phosphate: step 3/4. Functionally, catalyzes the phosphorylation of D-glycero-D-manno-heptose 7-phosphate at the C-1 position to selectively form D-glycero-beta-D-manno-heptose-1,7-bisphosphate. Its function is as follows. Catalyzes the ADP transfer from ATP to D-glycero-beta-D-manno-heptose 1-phosphate, yielding ADP-D-glycero-beta-D-manno-heptose. In Histophilus somni (strain 129Pt) (Haemophilus somnus), this protein is Bifunctional protein HldE.